Here is a 141-residue protein sequence, read N- to C-terminus: Nucleoside diphosphate kinase (141 aa).

Residues Lys11, Phe59, Arg87, Thr93, Arg104, and Asn114 each contribute to the ATP site. Residue His117 is the Pros-phosphohistidine intermediate of the active site.

The protein belongs to the NDK family. As to quaternary structure, homotetramer. The cofactor is Mg(2+).

The protein localises to the cytoplasm. The enzyme catalyses a 2'-deoxyribonucleoside 5'-diphosphate + ATP = a 2'-deoxyribonucleoside 5'-triphosphate + ADP. The catalysed reaction is a ribonucleoside 5'-diphosphate + ATP = a ribonucleoside 5'-triphosphate + ADP. Functionally, major role in the synthesis of nucleoside triphosphates other than ATP. The ATP gamma phosphate is transferred to the NDP beta phosphate via a ping-pong mechanism, using a phosphorylated active-site intermediate. This chain is Nucleoside diphosphate kinase, found in Chromobacterium violaceum (strain ATCC 12472 / DSM 30191 / JCM 1249 / CCUG 213 / NBRC 12614 / NCIMB 9131 / NCTC 9757 / MK).